The primary structure comprises 71 residues: Beta-defensin 10 (71 aa).

The first 23 residues, 1-23 (MKTLCSLLLIGCLLFSYDTPVVG), serve as a signal peptide directing secretion. Cystine bridges form between Cys-37/Cys-66, Cys-44/Cys-59, and Cys-49/Cys-67.

Belongs to the beta-defensin family.

It is found in the secreted. Functionally, has antibacterial activity. The chain is Beta-defensin 10 (Defb10) from Rattus norvegicus (Rat).